Here is a 602-residue protein sequence, read N- to C-terminus: mRNA-decapping enzyme 1A (602 aa).

Ser82 is modified (phosphoserine). The span at 152 to 161 shows a compositional bias: basic and acidic residues; it reads RSQQAARDKQ. Disordered stretches follow at residues 152–174, 191–234, and 267–291; these read RSQQAARDKQSPSQANGCSDQRP, NQMG…PSGH, and GDASQKEPSSFLPFPFEQSGGAPQS. Residues Ser162, Ser199, and Ser200 each carry the phosphoserine modification. Residues 193–229 are compositionally biased toward polar residues; sequence MGGSNISSPGLQPSTQLSNLGSTETLEETPSGSQDKS. Ser335 and Ser339 each carry phosphoserine. The residue at position 367 (Thr367) is a Phosphothreonine. Ser372 carries the post-translational modification Phosphoserine. An Asymmetric dimethylarginine modification is found at Arg395. Thr420 bears the Phosphothreonine mark. Phosphoserine is present on residues Ser441, Ser542, Ser543, and Ser545. A phosphothreonine mark is found at Thr548 and Thr551.

It belongs to the DCP1 family. In terms of assembly, forms a complex with EDC3, DCP2, DDX6 and EDC4/HEDLS, within this complex directly interacts with EDC3. Part of a cytoplasmic complex containing proteins involved in mRNA decay, including XRN1 and LSM1. Interacts with DCP1B. Interacts with DCP2. Interacts with DDX17 in an RNA-independent manner. Interacts with PNRC2. Interacts with SMAD4. Interacts with UPF1. Interacts with ZC3HAV1. Interacts with ZFP36L1. Interacts with NBDY. Interacts with DHX34; the interaction is RNA-independent. Ubiquitous, with highest expression in the spleen and testis (at protein level).

The protein resides in the cytoplasm. It is found in the P-body. The protein localises to the nucleus. It catalyses the reaction a 5'-end (N(7)-methyl 5'-triphosphoguanosine)-ribonucleoside in mRNA + H2O = N(7)-methyl-GDP + a 5'-end phospho-ribonucleoside in mRNA + 2 H(+). Necessary for the degradation of mRNAs, both in normal mRNA turnover and in nonsense-mediated mRNA decay. Removes the 7-methyl guanine cap structure from mRNA molecules, yielding a 5'-phosphorylated mRNA fragment and 7m-GDP. Contributes to the transactivation of target genes after stimulation by TGFB1. Essential for embryonic development. In Mus musculus (Mouse), this protein is mRNA-decapping enzyme 1A (Dcp1a).